We begin with the raw amino-acid sequence, 511 residues long: Transcription factor bHLH28 (511 aa).

A bHLH domain is found at 339–388; the sequence is DKPLNHVEAERMRREKLNHRFYALRAVVPNVSKMDKTSLLEDAVCYINEL.

In terms of assembly, homodimer.

It localises to the nucleus. This Arabidopsis thaliana (Mouse-ear cress) protein is Transcription factor bHLH28 (BHLH28).